The chain runs to 279 residues: DegV domain-containing protein CA_C0701 (279 aa).

In terms of domain architecture, DegV spans 4-277 (IKIVTDSTCD…TKACGVFFIE (274 aa)). Hexadecanoate-binding residues include Thr-62 and Ser-94.

Its function is as follows. May bind long-chain fatty acids, such as palmitate, and may play a role in lipid transport or fatty acid metabolism. This chain is DegV domain-containing protein CA_C0701, found in Clostridium acetobutylicum (strain ATCC 824 / DSM 792 / JCM 1419 / IAM 19013 / LMG 5710 / NBRC 13948 / NRRL B-527 / VKM B-1787 / 2291 / W).